We begin with the raw amino-acid sequence, 762 residues long: 5-methyltetrahydropteroyltriglutamate--homocysteine methyltransferase (762 aa).

Residues 17–20 and lysine 111 each bind 5-methyltetrahydropteroyltri-L-glutamate; that span reads REWK. L-homocysteine is bound by residues 435-437 and glutamate 488; that span reads IGS. L-methionine contacts are provided by residues 435–437 and glutamate 488; that span reads IGS. Residues 519-520 and tryptophan 565 each bind 5-methyltetrahydropteroyltri-L-glutamate; that span reads RC. Aspartate 603 is a binding site for L-homocysteine. Aspartate 603 serves as a coordination point for L-methionine. Glutamate 609 provides a ligand contact to 5-methyltetrahydropteroyltri-L-glutamate. Zn(2+) is bound by residues histidine 645, cysteine 647, and glutamate 669. Histidine 698 acts as the Proton donor in catalysis. Cysteine 730 serves as a coordination point for Zn(2+).

Belongs to the vitamin-B12 independent methionine synthase family. Zn(2+) is required as a cofactor.

It carries out the reaction 5-methyltetrahydropteroyltri-L-glutamate + L-homocysteine = tetrahydropteroyltri-L-glutamate + L-methionine. It participates in amino-acid biosynthesis; L-methionine biosynthesis via de novo pathway; L-methionine from L-homocysteine (MetE route): step 1/1. In terms of biological role, catalyzes the transfer of a methyl group from 5-methyltetrahydrofolate to homocysteine resulting in methionine formation. The sequence is that of 5-methyltetrahydropteroyltriglutamate--homocysteine methyltransferase from Bacillus thuringiensis (strain Al Hakam).